Consider the following 160-residue polypeptide: Serine-protein kinase RsbW (160 aa).

Belongs to the anti-sigma-factor family.

The enzyme catalyses L-seryl-[protein] + ATP = O-phospho-L-seryl-[protein] + ADP + H(+). It carries out the reaction L-threonyl-[protein] + ATP = O-phospho-L-threonyl-[protein] + ADP + H(+). Its function is as follows. Negative regulator of sigma-B activity. Phosphorylates and inactivates its specific antagonist protein, RsbV. Upon phosphorylation of RsbV, RsbW is released and binds to sigma-B, thereby blocking its ability to form an RNA polymerase holoenzyme (E-sigma-B). The chain is Serine-protein kinase RsbW from Bacillus cereus (strain G9842).